Consider the following 429-residue polypeptide: Glutamate-1-semialdehyde 2,1-aminomutase 2 (429 aa).

Lys-268 carries the N6-(pyridoxal phosphate)lysine modification.

The protein belongs to the class-III pyridoxal-phosphate-dependent aminotransferase family. HemL subfamily. As to quaternary structure, homodimer. The cofactor is pyridoxal 5'-phosphate.

It is found in the cytoplasm. The enzyme catalyses (S)-4-amino-5-oxopentanoate = 5-aminolevulinate. Its pathway is porphyrin-containing compound metabolism; protoporphyrin-IX biosynthesis; 5-aminolevulinate from L-glutamyl-tRNA(Glu): step 2/2. The sequence is that of Glutamate-1-semialdehyde 2,1-aminomutase 2 from Bacillus cereus (strain B4264).